Reading from the N-terminus, the 619-residue chain is Probable Xaa-Pro aminopeptidase P (619 aa).

Mn(2+)-binding residues include Asp416, Asp427, Glu525, and Glu539.

This sequence belongs to the peptidase M24B family. It depends on Mn(2+) as a cofactor.

It catalyses the reaction Release of any N-terminal amino acid, including proline, that is linked to proline, even from a dipeptide or tripeptide.. In terms of biological role, catalyzes the removal of a penultimate prolyl residue from the N-termini of peptides. The chain is Probable Xaa-Pro aminopeptidase P (AMPP) from Tuber melanosporum (strain Mel28) (Perigord black truffle).